The sequence spans 100 residues: Small ribosomal subunit protein uS14c (100 aa).

It belongs to the universal ribosomal protein uS14 family. In terms of assembly, part of the 30S ribosomal subunit.

The protein localises to the plastid. It is found in the chloroplast. In terms of biological role, binds 16S rRNA, required for the assembly of 30S particles. The sequence is that of Small ribosomal subunit protein uS14c from Thalassiosira pseudonana (Marine diatom).